The chain runs to 260 residues: Proteasome subunit alpha type-1 (260 aa).

The interval phenylalanine 231–histidine 260 is disordered. A compositionally biased stretch (basic and acidic residues) spans proline 250 to histidine 260.

Belongs to the peptidase T1A family. In terms of assembly, the 26S proteasome consists of a 20S proteasome core and two 19S regulatory subunits. The 20S proteasome core is a barrel-shaped complex made of 28 subunits that are arranged in four stacked rings. The two outer rings are each formed by seven alpha subunits, and the two inner rings are formed by seven beta subunits. The proteolytic activity is exerted by three beta-subunits PSMB5, PSMB6 and PSMB7.

The protein resides in the cytoplasm. It is found in the nucleus. Its function is as follows. Component of the 20S core proteasome complex involved in the proteolytic degradation of most intracellular proteins. This complex plays numerous essential roles within the cell by associating with different regulatory particles. Associated with two 19S regulatory particles, forms the 26S proteasome and thus participates in the ATP-dependent degradation of ubiquitinated proteins. The 26S proteasome plays a key role in the maintenance of protein homeostasis by removing misfolded or damaged proteins that could impair cellular functions, and by removing proteins whose functions are no longer required. Associated with the PA200 or PA28, the 20S proteasome mediates ubiquitin-independent protein degradation. This type of proteolysis is required in several pathways including spermatogenesis (20S-PA200 complex) or generation of a subset of MHC class I-presented antigenic peptides (20S-PA28 complex). This Gallus gallus (Chicken) protein is Proteasome subunit alpha type-1 (PSMA1).